The following is a 426-amino-acid chain: Enolase (426 aa).

A (2R)-2-phosphoglycerate-binding site is contributed by Q163. E205 (proton donor) is an active-site residue. 3 residues coordinate Mg(2+): D242, E286, and D313. (2R)-2-phosphoglycerate contacts are provided by K338, R367, S368, and K389. The Proton acceptor role is filled by K338.

Belongs to the enolase family. Mg(2+) is required as a cofactor.

Its subcellular location is the cytoplasm. The protein resides in the secreted. It is found in the cell surface. It catalyses the reaction (2R)-2-phosphoglycerate = phosphoenolpyruvate + H2O. It participates in carbohydrate degradation; glycolysis; pyruvate from D-glyceraldehyde 3-phosphate: step 4/5. Catalyzes the reversible conversion of 2-phosphoglycerate (2-PG) into phosphoenolpyruvate (PEP). It is essential for the degradation of carbohydrates via glycolysis. This Helicobacter pylori (strain P12) protein is Enolase.